The sequence spans 416 residues: Glutamyl-tRNA reductase (416 aa).

Substrate-binding positions include 49–52 (TCNR), serine 105, 110–112 (EPQ), and glutamine 116. Catalysis depends on cysteine 50, which acts as the Nucleophile. Residue 185 to 190 (GAGETI) participates in NADP(+) binding.

This sequence belongs to the glutamyl-tRNA reductase family. As to quaternary structure, homodimer.

The catalysed reaction is (S)-4-amino-5-oxopentanoate + tRNA(Glu) + NADP(+) = L-glutamyl-tRNA(Glu) + NADPH + H(+). It participates in porphyrin-containing compound metabolism; protoporphyrin-IX biosynthesis; 5-aminolevulinate from L-glutamyl-tRNA(Glu): step 1/2. Functionally, catalyzes the NADPH-dependent reduction of glutamyl-tRNA(Glu) to glutamate 1-semialdehyde (GSA). The polypeptide is Glutamyl-tRNA reductase (Shewanella denitrificans (strain OS217 / ATCC BAA-1090 / DSM 15013)).